Here is a 56-residue protein sequence, read N- to C-terminus: Ovomucoid (56 aa).

A Kazal-like domain is found at 6–56; the sequence is VDCSEYPKPACTLEYRPLCGSDSKTYANKCNFCNAVVESNGTLTLSHFGKC. 3 cysteine pairs are disulfide-bonded: cysteine 8/cysteine 38, cysteine 16/cysteine 35, and cysteine 24/cysteine 56. N-linked (GlcNAc...) asparagine glycosylation occurs at asparagine 45.

It localises to the secreted. This chain is Ovomucoid, found in Oreortyx pictus (Mountain quail).